We begin with the raw amino-acid sequence, 439 residues long: GTPase Obg (439 aa).

The Obg domain maps to 5–164 (TDFFDQATIV…LTLELELKML (160 aa)). The region spanning 165 to 335 (ADVGLVGFPN…LLQRVAELLR (171 aa)) is the OBG-type G domain. Residues 171 to 178 (GFPNAGKS), 196 to 200 (FTTLT), 217 to 220 (DIPG), 287 to 290 (NKAD), and 316 to 318 (SAA) contribute to the GTP site. Residues Ser-178 and Thr-198 each contribute to the Mg(2+) site. Residues 337–359 (DPPPQRDPVDPDEPPLEWPLPPV) are disordered. One can recognise an OCT domain in the interval 356 to 433 (LPPVDENAFT…IGRAELVWDD (78 aa)).

This sequence belongs to the TRAFAC class OBG-HflX-like GTPase superfamily. OBG GTPase family. In terms of assembly, monomer. Mg(2+) is required as a cofactor.

Its subcellular location is the cytoplasm. Its function is as follows. An essential GTPase which binds GTP, GDP and possibly (p)ppGpp with moderate affinity, with high nucleotide exchange rates and a fairly low GTP hydrolysis rate. Plays a role in control of the cell cycle, stress response, ribosome biogenesis and in those bacteria that undergo differentiation, in morphogenesis control. The polypeptide is GTPase Obg (Chloroflexus aggregans (strain MD-66 / DSM 9485)).